The chain runs to 383 residues: Insulinoma-associated protein 1a (383 aa).

The segment at 1-20 is SNAG domain; sequence MPRGFLVKRNKKATPVSYRV. Disordered stretches follow at residues 99–141 and 229–269; these read PVDL…AMRK and RWHK…SEDG. Polar residues predominate over residues 105–120; sequence GTSNSNRTGTTVTTKR. The span at 130–140 shows a compositional bias: basic residues; that stretch reads KPASKKAKAMR. Residues 209-231 form a C2H2-type 1 zinc finger; sequence YRCPECDKLFSCPANLASHRRWH. Positions 244 to 256 are enriched in basic and acidic residues; sequence APEKEETSSDRDT. A C2H2-type 2; degenerate zinc finger spans residues 271 to 295; sequence YDCQHCGKKFKRQAYLKKHVTAHHD. C2H2-type zinc fingers lie at residues 314–337 and 342–365; these read HLCP…RLQH and YPCK…NKCH.

The protein belongs to the INSM1 family.

It localises to the nucleus. May act as a transcriptional regulator. May play a role in neurogenesis and neuroendocrine cell differentiation during embryonic development. This chain is Insulinoma-associated protein 1a (insm1a), found in Danio rerio (Zebrafish).